Consider the following 638-residue polypeptide: Glucans biosynthesis glucosyltransferase H (638 aa).

6 consecutive transmembrane segments (helical) span residues 60–82 (FYLI…AVMW), 97–119 (FMFL…FCVV), 415–437 (IGHY…IPLV), 464–486 (LWIF…FALL), 499–521 (LRVL…VVMY), and 578–600 (LAMW…ALTS).

Belongs to the glycosyltransferase 2 family. OpgH subfamily.

It localises to the cell inner membrane. Its pathway is glycan metabolism; osmoregulated periplasmic glucan (OPG) biosynthesis. Involved in the biosynthesis of osmoregulated periplasmic glucans (OPGs). The protein is Glucans biosynthesis glucosyltransferase H of Xylella fastidiosa (strain 9a5c).